Reading from the N-terminus, the 244-residue chain is rRNA adenine N-6-methyltransferase (244 aa).

Residues N11, I13, G38, E59, D84, and N101 each contribute to the S-adenosyl-L-methionine site.

It belongs to the class I-like SAM-binding methyltransferase superfamily. rRNA adenine N(6)-methyltransferase family.

The catalysed reaction is adenosine(2085) in 23S rRNA + 2 S-adenosyl-L-methionine = N(6)-dimethyladenosine(2085) in 23S rRNA + 2 S-adenosyl-L-homocysteine + 2 H(+). In terms of biological role, this protein produces a dimethylation of the adenine residue at position 2085 in 23S rRNA, resulting in reduced affinity between ribosomes and macrolide-lincosamide-streptogramin B antibiotics. The protein is rRNA adenine N-6-methyltransferase (ermM) of Staphylococcus epidermidis.